Reading from the N-terminus, the 96-residue chain is Co-chaperonin GroES (96 aa).

Belongs to the GroES chaperonin family. In terms of assembly, heptamer of 7 subunits arranged in a ring. Interacts with the chaperonin GroEL.

It is found in the cytoplasm. Its function is as follows. Together with the chaperonin GroEL, plays an essential role in assisting protein folding. The GroEL-GroES system forms a nano-cage that allows encapsulation of the non-native substrate proteins and provides a physical environment optimized to promote and accelerate protein folding. GroES binds to the apical surface of the GroEL ring, thereby capping the opening of the GroEL channel. In Pelagibacter ubique (strain HTCC1062), this protein is Co-chaperonin GroES.